Here is a 586-residue protein sequence, read N- to C-terminus: Proline--tRNA ligase (586 aa).

Belongs to the class-II aminoacyl-tRNA synthetase family. ProS type 1 subfamily. In terms of assembly, homodimer.

Its subcellular location is the cytoplasm. It carries out the reaction tRNA(Pro) + L-proline + ATP = L-prolyl-tRNA(Pro) + AMP + diphosphate. Catalyzes the attachment of proline to tRNA(Pro) in a two-step reaction: proline is first activated by ATP to form Pro-AMP and then transferred to the acceptor end of tRNA(Pro). As ProRS can inadvertently accommodate and process non-cognate amino acids such as alanine and cysteine, to avoid such errors it has two additional distinct editing activities against alanine. One activity is designated as 'pretransfer' editing and involves the tRNA(Pro)-independent hydrolysis of activated Ala-AMP. The other activity is designated 'posttransfer' editing and involves deacylation of mischarged Ala-tRNA(Pro). The misacylated Cys-tRNA(Pro) is not edited by ProRS. The polypeptide is Proline--tRNA ligase (Leptospira biflexa serovar Patoc (strain Patoc 1 / Ames)).